The following is a 152-amino-acid chain: UPF0266 membrane protein CKO_01158 (152 aa).

3 helical membrane passes run 6–26 (LVLV…QFIM), 45–65 (VDSV…VTSH), and 67–87 (AQIT…IFWV).

This sequence belongs to the UPF0266 family.

It localises to the cell inner membrane. This chain is UPF0266 membrane protein CKO_01158, found in Citrobacter koseri (strain ATCC BAA-895 / CDC 4225-83 / SGSC4696).